A 358-amino-acid polypeptide reads, in one-letter code: DNA replication and repair protein RecF (358 aa).

30–37 lines the ATP pocket; that stretch reads GANGSGKT.

This sequence belongs to the RecF family.

It localises to the cytoplasm. Its function is as follows. The RecF protein is involved in DNA metabolism; it is required for DNA replication and normal SOS inducibility. RecF binds preferentially to single-stranded, linear DNA. It also seems to bind ATP. This chain is DNA replication and repair protein RecF, found in Edwardsiella ictaluri (strain 93-146).